Here is a 103-residue protein sequence, read N- to C-terminus: Cell division suppressor protein YneA (103 aa).

A LysM domain is found at 36–87 (VKIEVQSGDTLWGLADQVNDSKSIDKNAFIDWVTQHNDLASTEIQPGDILVI).

This sequence belongs to the YneA family.

The protein localises to the cytoplasm. In terms of biological role, inhibits cell division during the SOS response. Affects a later stage of the cell division protein assembly, after the assembly of the Z ring, by probably suppressing recruitment of FtsL and/or DivIC to the division machinery. The protein is Cell division suppressor protein YneA of Bacillus pumilus (strain SAFR-032).